Consider the following 243-residue polypeptide: ATP synthase subunit a (243 aa).

7 consecutive transmembrane segments (helical) span residues 29 to 49, 54 to 74, 89 to 109, 114 to 134, 144 to 164, 182 to 202, and 208 to 228; these read NASL…YIGL, IIPN…VSTI, VFTI…PLGF, HIAV…IIGF, ILLP…IELF, IAGH…NIFL, and IFII…AYIF.

It belongs to the ATPase A chain family. As to quaternary structure, F-type ATPases have 2 components, CF(1) - the catalytic core - and CF(0) - the membrane proton channel. CF(1) has five subunits: alpha(3), beta(3), gamma(1), delta(1), epsilon(1). CF(0) has three main subunits: a(1), b(2) and c(9-12). The alpha and beta chains form an alternating ring which encloses part of the gamma chain. CF(1) is attached to CF(0) by a central stalk formed by the gamma and epsilon chains, while a peripheral stalk is formed by the delta and b chains.

Its subcellular location is the cell inner membrane. Functionally, key component of the proton channel; it plays a direct role in the translocation of protons across the membrane. The sequence is that of ATP synthase subunit a from Ehrlichia canis (strain Jake).